Consider the following 231-residue polypeptide: Eukaryotic translation initiation factor 4E-1 (231 aa).

Positions 1–55 are disordered; the sequence is MVVEDTQKSSITDDQITANPNNENEDLEEGEILDDDDSSATSRPPSSSGALARNP. The segment covering 8-18 has biased composition (polar residues); that stretch reads KSSITDDQITA. Over residues 23–38 the composition is skewed to acidic residues; sequence ENEDLEEGEILDDDDS. Residues 39 to 48 are compositionally biased toward low complexity; sequence SATSRPPSSS. EIF4G-binding regions lie at residues 56–59 and 66–102; these read HPLE and FDNPSAKSKQAAWGSSIRPIYTFATVEEFWSIYNNIH. MRNA contacts are provided by residues 74-79, lysine 106, and 124-125; these read KQAAWG and WE. The cysteines at positions 129 and 167 are disulfide-linked. The segment at 150-159 is EIF4G-binding; sequence YTLLGMIGEQ. Residues 174–179 and 219–223 each bind mRNA; these read RNRQEK and KKHDR.

The protein belongs to the eukaryotic initiation factor 4E family. In terms of assembly, EIF4F is a multi-subunit complex, the composition of which varies with external and internal environmental conditions. It is composed of at least EIF4A, EIF4E and EIF4G. EIF4E is also known to interact with other partners. In higher plants two isoforms of EIF4F have been identified, named isoform EIF4F and isoform EIF(iso)4F. Isoform EIF4F has subunits p220 and p26, whereas isoform EIF(iso)4F has subunits p82 and p28. (Microbial infection) Interacts with potyvirus peanut stripe virus (PStV) helper component proteinase (HC-Pro) in the cytoplasm and with PStV viral genome-linked protein (VPg) in the nucleus; these interactions are possible in susceptible hosts but impaired in resistant plants. According to the redox status, the Cys-129-Cys-167 disulfide bridge may have a role in regulating protein function by affecting its ability to bind capped mRNA. Expressed ubiquitously with highest levels in young leaves and roots, and lowest levels in flowers.

Its subcellular location is the nucleus. The protein resides in the cytoplasm. Its function is as follows. Component of the protein complex eIF4F, which is involved in the recognition of the mRNA cap, ATP-dependent unwinding of 5'-terminal secondary structure and recruitment of mRNA to the ribosome. Recognizes and binds the 7-methylguanosine-containing mRNA cap during an early step in the initiation of protein synthesis and facilitates ribosome binding by inducing the unwinding of the mRNAs secondary structures. Key component of recessive resistance to potyviruses such as peanut stripe virus (PStV). Functionally, (Microbial infection) Susceptibility host factor required for viral infection by recruiting viral RNAs to the host ribosomal complex via an interaction with viral genome-linked protein (VPg). The protein is Eukaryotic translation initiation factor 4E-1 of Arachis hypogaea (Peanut).